The following is a 215-amino-acid chain: Sodium channel regulatory subunit beta-2 (215 aa).

A signal peptide spans 1-29; it reads MHRDAWLPRPAFSLTGLSLFFSLVPSGRS. Over 30 to 157 the chain is Extracellular; that stretch reads MEVTVPTTLS…LEVPPERDST (128 aa). The region spanning 32–154 is the Ig-like C2-type domain; the sequence is VTVPTTLSVL…QVLLEVPPER (123 aa). N-linked (GlcNAc...) asparagine glycans are attached at residues asparagine 42, asparagine 66, and asparagine 74. 2 cysteine pairs are disulfide-bonded: cysteine 50–cysteine 127 and cysteine 72–cysteine 75. Residues 158–179 form a helical membrane-spanning segment; the sequence is VAVIVGASVGGFLAVVILVLMV. Residues 180 to 215 lie on the Cytoplasmic side of the membrane; it reads VKCVRRKKEQKLSTDDLKTEEEGKTDGEGNAEDGAK. Residues 187–215 form a disordered region; that stretch reads KEQKLSTDDLKTEEEGKTDGEGNAEDGAK. Over residues 189 to 215 the composition is skewed to basic and acidic residues; the sequence is QKLSTDDLKTEEEGKTDGEGNAEDGAK. Serine 192 bears the Phosphoserine mark. Position 204 is a phosphothreonine (threonine 204).

It belongs to the sodium channel auxiliary subunit SCN2B (TC 8.A.17) family. In terms of assembly, a voltage-gated sodium (Nav) channel consists of an ion-conducting pore-forming alpha subunit functional on its own that is regulated by one or more beta subunits. The beta subunit SCN2B is disulfide-linked to the pore-forming alpha subunit. Interacts with SCN1A; regulatory subunit of SCN1A/Nav1.1. Interacts with SCN2A; regulatory subunit of SCN2A/Nav1.2. Interacts with SCN3A; regulatory subunit of SCN3A/Nav1.3. Interacts with SCN5A; regulatory subunit of SCN5A/Nav1.5. Interacts with SCN8A; regulatory subunit of SCN8A/Nav1.6. Interacts with SCN9A; regulatory subunit of SCN9A/Nav1.7. Interacts with SCN10A; regulatory subunit of SCN10A/Nav1.8. Interacts with TNR; may play a crucial role in clustering and regulation of activity of SCN2B-containing Nav channels at nodes of Ranvier.

It is found in the cell membrane. It localises to the cell projection. Its subcellular location is the axon. Functionally, regulatory subunit of multiple voltage-gated sodium (Nav) channels directly mediating the depolarization of excitable membranes. Navs, also called VGSCs (voltage-gated sodium channels) or VDSCs (voltage-dependent sodium channels), operate by switching between closed and open conformations depending on the voltage difference across the membrane. In the open conformation they allow Na(+) ions to selectively pass through the pore, along their electrochemical gradient. The influx of Na+ ions provokes membrane depolarization, initiating the propagation of electrical signals throughout cells and tissues. The accessory beta subunits participate in localization and functional modulation of the Nav channels. Modulates the activity of SCN1A/Nav1.1, SCN2A/Nav1.2, SCN2A/Nav1.3, SCN5A/Nav1.5, SCN8A/Nav1.6, SCN9A/Nav1.7 and SCN10A/Nav1.8. This is Sodium channel regulatory subunit beta-2 from Rattus norvegicus (Rat).